The chain runs to 256 residues: Trypsin, alkaline C (256 aa).

Positions 1–17 (MRLFLALLALGFAAVAA) are cleaved as a signal peptide. The propeptide at 18–24 (VPANPQR) is activation peptide. In terms of domain architecture, Peptidase S1 spans 25–256 (IVGGSTTTIQ…RYTSWISNNS (232 aa)). Cys55 and Cys71 form a disulfide bridge. Residues His70 and Asp115 each act as charge relay system in the active site. 2 disulfides stabilise this stretch: Cys180–Cys197 and Cys209–Cys233. The Charge relay system role is filled by Ser213.

This sequence belongs to the peptidase S1 family. As to expression, midgut.

The protein resides in the secreted. It is found in the extracellular space. It catalyses the reaction Preferential cleavage: Arg-|-Xaa, Lys-|-Xaa.. The protein is Trypsin, alkaline C of Manduca sexta (Tobacco hawkmoth).